A 930-amino-acid polypeptide reads, in one-letter code: Isoleucine--tRNA ligase (930 aa).

A 'HIGH' region motif is present at residues 57–67 (PYANGNIHVGH). Glu-554 lines the L-isoleucyl-5'-AMP pocket. Residues 595–599 (KMSKS) carry the 'KMSKS' region motif. Lys-598 is an ATP binding site. Residues Cys-888, Cys-891, Cys-908, and Cys-911 each contribute to the Zn(2+) site.

This sequence belongs to the class-I aminoacyl-tRNA synthetase family. IleS type 1 subfamily. Monomer. Requires Zn(2+) as cofactor.

It is found in the cytoplasm. The enzyme catalyses tRNA(Ile) + L-isoleucine + ATP = L-isoleucyl-tRNA(Ile) + AMP + diphosphate. Functionally, catalyzes the attachment of isoleucine to tRNA(Ile). As IleRS can inadvertently accommodate and process structurally similar amino acids such as valine, to avoid such errors it has two additional distinct tRNA(Ile)-dependent editing activities. One activity is designated as 'pretransfer' editing and involves the hydrolysis of activated Val-AMP. The other activity is designated 'posttransfer' editing and involves deacylation of mischarged Val-tRNA(Ile). The polypeptide is Isoleucine--tRNA ligase (Streptococcus gordonii (strain Challis / ATCC 35105 / BCRC 15272 / CH1 / DL1 / V288)).